Here is a 348-residue protein sequence, read N- to C-terminus: Protein RecA (348 aa).

65–72 contributes to the ATP binding site; it reads GPESSGKT.

This sequence belongs to the RecA family.

It is found in the cytoplasm. Functionally, can catalyze the hydrolysis of ATP in the presence of single-stranded DNA, the ATP-dependent uptake of single-stranded DNA by duplex DNA, and the ATP-dependent hybridization of homologous single-stranded DNAs. It interacts with LexA causing its activation and leading to its autocatalytic cleavage. In Vibrio anguillarum (Listonella anguillarum), this protein is Protein RecA.